The primary structure comprises 147 residues: Large ribosomal subunit protein uL15 (147 aa).

Belongs to the universal ribosomal protein uL15 family. As to quaternary structure, part of the 50S ribosomal subunit.

Functionally, binds to the 23S rRNA. This is Large ribosomal subunit protein uL15 from Blochmanniella floridana.